Reading from the N-terminus, the 2378-residue chain is Serine/threonine-protein kinase ATM (2378 aa).

The FAT domain maps to Leu-1415–Glu-1937. Residues Trp-2044–Asn-2366 form the PI3K/PI4K catalytic domain. Residues Ile-2050–Thr-2056 are G-loop. A catalytic loop region spans residues Gly-2218–Asn-2226. Residues His-2238–Thr-2263 form an activation loop region. Residues Thr-2346–Leu-2378 form the FATC domain.

This sequence belongs to the PI3/PI4-kinase family. ATM subfamily.

It is found in the nucleus. It carries out the reaction L-seryl-[protein] + ATP = O-phospho-L-seryl-[protein] + ADP + H(+). It catalyses the reaction L-threonyl-[protein] + ATP = O-phospho-L-threonyl-[protein] + ADP + H(+). Serine/threonine protein kinase which activates checkpoint signaling in the presence of DNA double strand breaks (DSBs) and other forms of DNA damage induced by ionizing radiation and other genotoxic stresses such as UV. Plays a role in maintaining genome stability. This is Serine/threonine-protein kinase ATM (atm-1) from Caenorhabditis elegans.